The sequence spans 1461 residues: Autotransporter adhesin SadA (1461 aa).

An N-terminal signal peptide occupies residues 1 to 54 (MNRIFKVLWNAATGTFVVTSETAKSRGKKNGRRKLAVSALIGLSSIMVSADALA). Residues 55 to 1372 (NAGNDTGDGV…EEANTYTDQK (1318 aa)) are surface exposed passenger domain. The interval 1373–1461 (MGEMNSKIKG…SAAIGAGFQW (89 aa)) is translocator domain. 4 beta stranded membrane passes run 1407 to 1417 (GANMTSIAGGT), 1421 to 1431 (ESAVAIGVSMV), 1440 to 1446 (KLQGTSN), and 1450 to 1461 (DYSAAIGAGFQW).

This sequence belongs to the autotransporter-2 (AT-2) (TC 1.B.40) family. Homotrimer.

The protein resides in the cell surface. It is found in the cell outer membrane. In terms of biological role, involved in cell aggregation, biofilm formation, and adhesion to human intestinal epithelial cells. The protein is Autotransporter adhesin SadA of Salmonella typhimurium (strain LT2 / SGSC1412 / ATCC 700720).